A 633-amino-acid chain; its full sequence is 1-deoxy-D-xylulose-5-phosphate synthase (633 aa).

Residues H72 and 113 to 115 contribute to the thiamine diphosphate site; that span reads GHS. D144 is a Mg(2+) binding site. Thiamine diphosphate-binding positions include 145–146, N173, Y284, and E367; that span reads GA. N173 lines the Mg(2+) pocket.

The protein belongs to the transketolase family. DXPS subfamily. Homodimer. The cofactor is Mg(2+). Thiamine diphosphate is required as a cofactor.

It carries out the reaction D-glyceraldehyde 3-phosphate + pyruvate + H(+) = 1-deoxy-D-xylulose 5-phosphate + CO2. It functions in the pathway metabolic intermediate biosynthesis; 1-deoxy-D-xylulose 5-phosphate biosynthesis; 1-deoxy-D-xylulose 5-phosphate from D-glyceraldehyde 3-phosphate and pyruvate: step 1/1. Catalyzes the acyloin condensation reaction between C atoms 2 and 3 of pyruvate and glyceraldehyde 3-phosphate to yield 1-deoxy-D-xylulose-5-phosphate (DXP). In Bacillus velezensis (strain DSM 23117 / BGSC 10A6 / LMG 26770 / FZB42) (Bacillus amyloliquefaciens subsp. plantarum), this protein is 1-deoxy-D-xylulose-5-phosphate synthase.